A 268-amino-acid chain; its full sequence is Tryptophan synthase alpha chain (268 aa).

Active-site proton acceptor residues include Glu-49 and Asp-60.

Belongs to the TrpA family. In terms of assembly, tetramer of two alpha and two beta chains.

The enzyme catalyses (1S,2R)-1-C-(indol-3-yl)glycerol 3-phosphate + L-serine = D-glyceraldehyde 3-phosphate + L-tryptophan + H2O. The protein operates within amino-acid biosynthesis; L-tryptophan biosynthesis; L-tryptophan from chorismate: step 5/5. The alpha subunit is responsible for the aldol cleavage of indoleglycerol phosphate to indole and glyceraldehyde 3-phosphate. The chain is Tryptophan synthase alpha chain from Yersinia pestis bv. Antiqua (strain Antiqua).